The following is a 328-amino-acid chain: Dihydroorotate dehydrogenase (quinone), mitochondrial (328 aa).

A helical transmembrane segment spans residues 21–38; the sequence is AHGLSIAGLKTGLVTGSA. FMN is bound by residues 61–65 and threonine 85; that span reads AGYDK. Substrate is bound at residue lysine 65. A substrate-binding site is contributed by 110-114; the sequence is NRLGF. Residues asparagine 139 and asparagine 170 each coordinate FMN. 170 to 175 serves as a coordination point for substrate; it reads NISSPN. Serine 173 (nucleophile) is an active-site residue. The FMN site is built by lysine 215 and serine 243. 244 to 245 lines the substrate pocket; that stretch reads NT. FMN is bound by residues glycine 266 and glycine 295.

Belongs to the dihydroorotate dehydrogenase family. Type 2 subfamily. Requires FMN as cofactor.

The protein localises to the mitochondrion inner membrane. It catalyses the reaction (S)-dihydroorotate + a quinone = orotate + a quinol. It participates in pyrimidine metabolism; UMP biosynthesis via de novo pathway; orotate from (S)-dihydroorotate (quinone route): step 1/1. In terms of biological role, catalyzes the conversion of dihydroorotate to orotate with quinone as electron acceptor. In Cyclocybe aegerita (Black poplar mushroom), this protein is Dihydroorotate dehydrogenase (quinone), mitochondrial (URA1).